The sequence spans 101 residues: Small ribosomal subunit protein uS10 (101 aa).

The protein belongs to the universal ribosomal protein uS10 family. As to quaternary structure, part of the 30S ribosomal subunit.

In terms of biological role, involved in the binding of tRNA to the ribosomes. The sequence is that of Small ribosomal subunit protein uS10 from Porphyromonas gingivalis (strain ATCC 33277 / DSM 20709 / CIP 103683 / JCM 12257 / NCTC 11834 / 2561).